The chain runs to 345 residues: Methylthioribose-1-phosphate isomerase (345 aa).

Substrate contacts are provided by residues 44–46 (RGA), R86, and Q194. The active-site Proton donor is D235. 245 to 246 (NK) provides a ligand contact to substrate.

This sequence belongs to the eIF-2B alpha/beta/delta subunits family. MtnA subfamily.

The enzyme catalyses 5-(methylsulfanyl)-alpha-D-ribose 1-phosphate = 5-(methylsulfanyl)-D-ribulose 1-phosphate. The protein operates within amino-acid biosynthesis; L-methionine biosynthesis via salvage pathway; L-methionine from S-methyl-5-thio-alpha-D-ribose 1-phosphate: step 1/6. Functionally, catalyzes the interconversion of methylthioribose-1-phosphate (MTR-1-P) into methylthioribulose-1-phosphate (MTRu-1-P). This is Methylthioribose-1-phosphate isomerase from Desulfitobacterium hafniense (strain Y51).